A 433-amino-acid chain; its full sequence is MKKRLYIETLGCAMNVRDSEHIIAELTQKEDYELTQNLQEADLILINTCSVREKPVHKLFSEIGYFNKKKKEGAKIGVCGCTASHLGEEIIKKAPYVSFVLGARNVSKIRDVIKQEKAVEVDIDYDESTYAFSDFRTSPYKAFINISIGCDKKCTFCIVPNTRGEEISIPPELILQEVRRAVDTGAKEIFLLGQNVNNYGRSFSDKARKVDFTDLLRMVSEIDGVRRIRFTSPHPLHMDDKFLQEFATNPKICKSMHMPLQSGSTKVLRDMKRGYTKEWFLDRAMKLREMVPEVHISTDIIVGFPGESEEDFADTIDVVQKVRFEQIFSFKYSPRPLTPAKDYENQIPDEVASRRLSYLQDLHLQMLDSISEQEKDKVYEVYFEELKPGGYVAGRTDNNWIVKVKGSEELLGEFKSVRITKPGRLSLEGELVG.

The MTTase N-terminal domain maps to 3–118 (KRLYIETLGC…IRDVIKQEKA (116 aa)). [4Fe-4S] cluster is bound by residues C12, C49, C81, C150, C154, and C157. In terms of domain architecture, Radical SAM core spans 136-371 (RTSPYKAFIN…LHLQMLDSIS (236 aa)). Residues 372 to 433 (EQEKDKVYEV…RLSLEGELVG (62 aa)) form the TRAM domain.

Belongs to the methylthiotransferase family. MiaB subfamily. In terms of assembly, monomer. [4Fe-4S] cluster serves as cofactor.

It localises to the cytoplasm. It catalyses the reaction N(6)-dimethylallyladenosine(37) in tRNA + (sulfur carrier)-SH + AH2 + 2 S-adenosyl-L-methionine = 2-methylsulfanyl-N(6)-dimethylallyladenosine(37) in tRNA + (sulfur carrier)-H + 5'-deoxyadenosine + L-methionine + A + S-adenosyl-L-homocysteine + 2 H(+). Catalyzes the methylthiolation of N6-(dimethylallyl)adenosine (i(6)A), leading to the formation of 2-methylthio-N6-(dimethylallyl)adenosine (ms(2)i(6)A) at position 37 in tRNAs that read codons beginning with uridine. In Nitratiruptor sp. (strain SB155-2), this protein is tRNA-2-methylthio-N(6)-dimethylallyladenosine synthase.